The chain runs to 304 residues: Sulfate adenylyltransferase subunit 2 (304 aa).

This sequence belongs to the PAPS reductase family. CysD subfamily. As to quaternary structure, heterodimer composed of CysD, the smaller subunit, and CysN.

It catalyses the reaction sulfate + ATP + H(+) = adenosine 5'-phosphosulfate + diphosphate. The protein operates within sulfur metabolism; hydrogen sulfide biosynthesis; sulfite from sulfate: step 1/3. With CysN forms the ATP sulfurylase (ATPS) that catalyzes the adenylation of sulfate producing adenosine 5'-phosphosulfate (APS) and diphosphate, the first enzymatic step in sulfur assimilation pathway. APS synthesis involves the formation of a high-energy phosphoric-sulfuric acid anhydride bond driven by GTP hydrolysis by CysN coupled to ATP hydrolysis by CysD. The chain is Sulfate adenylyltransferase subunit 2 from Halorhodospira halophila (strain DSM 244 / SL1) (Ectothiorhodospira halophila (strain DSM 244 / SL1)).